We begin with the raw amino-acid sequence, 657 residues long: Conserved oligomeric Golgi complex subunit 6 (657 aa).

The protein belongs to the COG6 family. Component of the conserved oligomeric Golgi complex which is composed of eight different subunits and is required for normal Golgi morphology and localization.

The protein localises to the golgi apparatus membrane. In terms of biological role, required for normal Golgi function. This is Conserved oligomeric Golgi complex subunit 6 (COG6) from Homo sapiens (Human).